Here is a 297-residue protein sequence, read N- to C-terminus: Pantothenate synthetase (297 aa).

30–37 contributes to the ATP binding site; sequence MGYLHAGH. H37 serves as the catalytic Proton donor. (R)-pantoate is bound at residue Q61. Q61 contributes to the beta-alanine binding site. 147-150 contacts ATP; the sequence is GEKD. Residue Q153 participates in (R)-pantoate binding. ATP-binding positions include V176 and 184–187; that span reads LSSR.

It belongs to the pantothenate synthetase family. In terms of assembly, homodimer.

The protein localises to the cytoplasm. It catalyses the reaction (R)-pantoate + beta-alanine + ATP = (R)-pantothenate + AMP + diphosphate + H(+). It functions in the pathway cofactor biosynthesis; (R)-pantothenate biosynthesis; (R)-pantothenate from (R)-pantoate and beta-alanine: step 1/1. Functionally, catalyzes the condensation of pantoate with beta-alanine in an ATP-dependent reaction via a pantoyl-adenylate intermediate. This is Pantothenate synthetase from Rhizobium etli (strain ATCC 51251 / DSM 11541 / JCM 21823 / NBRC 15573 / CFN 42).